The following is a 151-amino-acid chain: Large ribosomal subunit protein bL17 (151 aa).

The protein belongs to the bacterial ribosomal protein bL17 family. Part of the 50S ribosomal subunit. Contacts protein L32.

The sequence is that of Large ribosomal subunit protein bL17 from Chlorobium limicola (strain DSM 245 / NBRC 103803 / 6330).